The following is a 297-amino-acid chain: Transmembrane protein 169 (297 aa).

The tract at residues 1-84 (MEEPALVEGQ…PKEEEGDDFI (84 aa)) is disordered. At 1 to 159 (MEEPALVEGQ…CQLGADRGPH (159 aa)) the chain is on the extracellular side. A compositionally biased stretch (polar residues) spans 9–18 (GQSQLPSPHH). Residues 60-84 (ETLDEEPGESEGGDQPKEEEGDDFI) show a composition bias toward acidic residues. Residues 160–180 (VVLWTLVCLPVVFLLSFVVSF) traverse the membrane as a helical segment. Residues 181 to 210 (YYGTITWYNIFLVYNEERTFWHKISCCPCL) are Cytoplasmic-facing. Residues 211-231 (ILCYPVLIMAMASSLGLYAAV) traverse the membrane as a helical segment. Residues 232 to 297 (VQLSWSWEAW…ATQEIETSAV (66 aa)) are Extracellular-facing.

Its subcellular location is the membrane. This Bos taurus (Bovine) protein is Transmembrane protein 169 (TMEM169).